The sequence spans 240 residues: Small ribosomal subunit protein uS2 (240 aa).

The protein belongs to the universal ribosomal protein uS2 family. As to quaternary structure, component of the small ribosomal subunit. Mature ribosomes consist of a small (40S) and a large (60S) subunit. The 40S subunit contains about 33 different proteins and 1 molecule of RNA (18S). The 60S subunit contains about 49 different proteins and 3 molecules of RNA (25S, 5.8S and 5S). Interacts with RPS21.

The protein localises to the cytoplasm. Functionally, required for the assembly and/or stability of the 40S ribosomal subunit. Required for the processing of the 20S rRNA-precursor to mature 18S rRNA in a late step of the maturation of 40S ribosomal subunits. The chain is Small ribosomal subunit protein uS2 from Enterocytozoon bieneusi (strain H348) (Microsporidian parasite).